We begin with the raw amino-acid sequence, 163 residues long: Keratin-associated protein 11-1 (163 aa).

4 consecutive repeat copies span residues 111–120 (CQPLGGISSV), 121–130 (CQPVGGISTV), 131–140 (CQPVGGVSTV), and 141–150 (CQPACGVSRT). Positions 111 to 150 (CQPLGGISSVCQPVGGISTVCQPVGGVSTVCQPACGVSRT) are 4 X 10 AA approximate repeats.

It belongs to the PMG family. In terms of tissue distribution, expressed in the upper matrix and in the entire hair cortex.

In the hair cortex, hair keratin intermediate filaments are embedded in an interfilamentous matrix, consisting of hair keratin-associated proteins (KRTAP), which are essential for the formation of a rigid and resistant hair shaft through their extensive disulfide bond cross-linking with abundant cysteine residues of hair keratins. The matrix proteins include the high-sulfur and high-glycine-tyrosine keratins. The sequence is that of Keratin-associated protein 11-1 (KRTAP11-1) from Homo sapiens (Human).